An 822-amino-acid chain; its full sequence is Dextranase (822 aa).

Positions 1-38 (MTVNLTLQHASEIIGQDNVDLTLAAGASAKVSNLTVAS) are cleaved as a signal peptide. Disordered regions lie at residues 607-669 (EPVT…VDEL) and 683-788 (ETAH…ETTS). Over residues 619 to 636 (NTVTSEASSETAKSENTT) the composition is skewed to low complexity. Residues 693–705 (SVSNTDQGTVASD) show a composition bias toward polar residues. The segment covering 706-761 (SITTPASEAASTAASTVSSEVSESVTVSSEPSETENSSEASTSESATPTTTAISES) has biased composition (low complexity). The segment covering 771-788 (LTESESQASTSLVSETTS) has biased composition (polar residues).

The protein belongs to the glycosyl hydrolase 66 family.

The catalysed reaction is Endohydrolysis of (1-&gt;6)-alpha-D-glucosidic linkages in dextran.. The chain is Dextranase (dex) from Streptococcus salivarius.